A 194-amino-acid polypeptide reads, in one-letter code: Protein GrpE (194 aa).

Residues 1 to 44 form a disordered region; it reads MAEEKQNEELNEQEELNETEAETAEAEQTAAEADAPAEETQTEM. The segment covering 9 to 25 has biased composition (acidic residues); it reads ELNEQEELNETEAETAE.

It belongs to the GrpE family. Homodimer.

Its subcellular location is the cytoplasm. Functionally, participates actively in the response to hyperosmotic and heat shock by preventing the aggregation of stress-denatured proteins, in association with DnaK and GrpE. It is the nucleotide exchange factor for DnaK and may function as a thermosensor. Unfolded proteins bind initially to DnaJ; upon interaction with the DnaJ-bound protein, DnaK hydrolyzes its bound ATP, resulting in the formation of a stable complex. GrpE releases ADP from DnaK; ATP binding to DnaK triggers the release of the substrate protein, thus completing the reaction cycle. Several rounds of ATP-dependent interactions between DnaJ, DnaK and GrpE are required for fully efficient folding. The chain is Protein GrpE from Bacillus licheniformis (strain ATCC 14580 / DSM 13 / JCM 2505 / CCUG 7422 / NBRC 12200 / NCIMB 9375 / NCTC 10341 / NRRL NRS-1264 / Gibson 46).